Reading from the N-terminus, the 303-residue chain is Serine/threonine-protein phosphatase PP-X homolog 1 (303 aa).

Mn(2+)-binding residues include Asp-51, His-53, Asp-79, and Asn-111. His-112 serves as the catalytic Proton donor. Mn(2+) is bound by residues His-161 and His-235.

Belongs to the PPP phosphatase family. PP-4 (PP-X) subfamily. The cofactor is Mn(2+).

The catalysed reaction is O-phospho-L-seryl-[protein] + H2O = L-seryl-[protein] + phosphate. The enzyme catalyses O-phospho-L-threonyl-[protein] + H2O = L-threonyl-[protein] + phosphate. This is Serine/threonine-protein phosphatase PP-X homolog 1 (Ppx1) from Paramecium tetraurelia.